We begin with the raw amino-acid sequence, 447 residues long: Methylenetetrahydrofolate--tRNA-(uracil-5-)-methyltransferase TrmFO (447 aa).

8 to 13 (GGGLAG) contacts FAD. The interval 398–421 (NWGLVPAPPKRENGRRLGRQERRR) is disordered. Residues 406–417 (PKRENGRRLGRQ) are compositionally biased toward basic and acidic residues.

The protein belongs to the MnmG family. TrmFO subfamily. The cofactor is FAD.

Its subcellular location is the cytoplasm. It carries out the reaction uridine(54) in tRNA + (6R)-5,10-methylene-5,6,7,8-tetrahydrofolate + NADH + H(+) = 5-methyluridine(54) in tRNA + (6S)-5,6,7,8-tetrahydrofolate + NAD(+). The catalysed reaction is uridine(54) in tRNA + (6R)-5,10-methylene-5,6,7,8-tetrahydrofolate + NADPH + H(+) = 5-methyluridine(54) in tRNA + (6S)-5,6,7,8-tetrahydrofolate + NADP(+). Functionally, catalyzes the folate-dependent formation of 5-methyl-uridine at position 54 (M-5-U54) in all tRNAs. The polypeptide is Methylenetetrahydrofolate--tRNA-(uracil-5-)-methyltransferase TrmFO (Rubrobacter xylanophilus (strain DSM 9941 / JCM 11954 / NBRC 16129 / PRD-1)).